We begin with the raw amino-acid sequence, 282 residues long: uncharacterized protein (282 aa).

A helical transmembrane segment spans residues 22-42; the sequence is YLFTLGSFVTMFFVLCISPVF.

It is found in the cell membrane. This is an uncharacterized protein from Bacillus anthracis.